A 387-amino-acid polypeptide reads, in one-letter code: Probable NADH-dependent butanol dehydrogenase 1 (387 aa).

Belongs to the iron-containing alcohol dehydrogenase family.

It functions in the pathway alcohol metabolism; butanol biosynthesis. The protein is Probable NADH-dependent butanol dehydrogenase 1 (yugJ) of Bacillus subtilis (strain 168).